The sequence spans 505 residues: RNA-binding region-containing protein 3 (505 aa).

Residues 15–90 (KTLIIRHLPR…RTLVVEFAKD (76 aa)) enclose the RRM 1 domain. Disordered stretches follow at residues 96 to 123 (ILKD…QPSV), 193 to 236 (PPMF…EEER), 354 to 374 (AQVP…SEFI), and 486 to 505 (ARSA…GRKH). The segment covering 193–214 (PPMFEMPSGPLPPPFPPENPPL) has biased composition (pro residues). Composition is skewed to acidic residues over residues 221–235 (GSEE…DEEE) and 361–370 (EEQEEDEDIP). The RRM 2 domain maps to 405–488 (CRLYVKNVAK…KPLVVQFARS (84 aa)). Residues 491–505 (PKQESADPKKGGRKH) are compositionally biased toward basic and acidic residues.

Component of the U11/U12 snRNPs that are part of the U12-type spliceosome.

Its subcellular location is the nucleus. In terms of biological role, participates in pre-mRNA U12-dependent splicing, performed by the minor spliceosome which removes U12-type introns. U12-type introns comprise less than 1% of all non-coding sequences. The sequence is that of RNA-binding region-containing protein 3 from Danio rerio (Zebrafish).